The chain runs to 586 residues: Arginine--tRNA ligase (586 aa).

A 'HIGH' region motif is present at residues 131 to 141 (ANPTGPMHVGH).

Belongs to the class-I aminoacyl-tRNA synthetase family. Monomer.

Its subcellular location is the cytoplasm. The catalysed reaction is tRNA(Arg) + L-arginine + ATP = L-arginyl-tRNA(Arg) + AMP + diphosphate. The polypeptide is Arginine--tRNA ligase (Azorhizobium caulinodans (strain ATCC 43989 / DSM 5975 / JCM 20966 / LMG 6465 / NBRC 14845 / NCIMB 13405 / ORS 571)).